A 392-amino-acid chain; its full sequence is Sulfate adenylyltransferase (392 aa).

The protein belongs to the sulfate adenylyltransferase family.

The catalysed reaction is sulfate + ATP + H(+) = adenosine 5'-phosphosulfate + diphosphate. Its pathway is sulfur metabolism; hydrogen sulfide biosynthesis; sulfite from sulfate: step 1/3. The polypeptide is Sulfate adenylyltransferase (Nostoc punctiforme (strain ATCC 29133 / PCC 73102)).